The primary structure comprises 116 residues: Promotilin (116 aa).

Residues methionine 1–alanine 25 form the signal peptide. Positions arginine 39 to asparagine 74 are disordered.

This sequence belongs to the motilin family.

It localises to the secreted. Functionally, plays an important role in the regulation of interdigestive gastrointestinal motility and indirectly causes rhythmic contraction of duodenal and colonic smooth muscle. In Felis catus (Cat), this protein is Promotilin (MLN).